A 369-amino-acid polypeptide reads, in one-letter code: Anhydro-N-acetylmuramic acid kinase (369 aa).

12 to 19 (GTSMDGVD) provides a ligand contact to ATP.

This sequence belongs to the anhydro-N-acetylmuramic acid kinase family.

The enzyme catalyses 1,6-anhydro-N-acetyl-beta-muramate + ATP + H2O = N-acetyl-D-muramate 6-phosphate + ADP + H(+). The protein operates within amino-sugar metabolism; 1,6-anhydro-N-acetylmuramate degradation. It functions in the pathway cell wall biogenesis; peptidoglycan recycling. Its function is as follows. Catalyzes the specific phosphorylation of 1,6-anhydro-N-acetylmuramic acid (anhMurNAc) with the simultaneous cleavage of the 1,6-anhydro ring, generating MurNAc-6-P. Is required for the utilization of anhMurNAc either imported from the medium or derived from its own cell wall murein, and thus plays a role in cell wall recycling. The sequence is that of Anhydro-N-acetylmuramic acid kinase from Shewanella woodyi (strain ATCC 51908 / MS32).